The primary structure comprises 185 residues: Large ribosomal subunit protein uL5c (185 aa).

Belongs to the universal ribosomal protein uL5 family. As to quaternary structure, part of the 50S ribosomal subunit; contacts the 5S rRNA.

The protein localises to the plastid. It localises to the chloroplast. Binds 5S rRNA, forms part of the central protuberance of the 50S subunit. In Chlorokybus atmophyticus (Soil alga), this protein is Large ribosomal subunit protein uL5c (rpl5).